Reading from the N-terminus, the 109-residue chain is uncharacterized protein (109 aa).

Residues 67 to 96 (YFGNKLWRPTPRSGQSGQSRPKTGPHGSQR) are disordered. The segment covering 78–87 (RSGQSGQSRP) has biased composition (polar residues).

This is an uncharacterized protein from Saccharomyces cerevisiae (strain ATCC 204508 / S288c) (Baker's yeast).